Reading from the N-terminus, the 279-residue chain is CDP-paratose synthase (279 aa).

Residue tyrosine 115 is the Proton acceptor of the active site.

Belongs to the NAD(P)-dependent epimerase/dehydratase family.

The enzyme catalyses CDP-alpha-D-paratose + NADP(+) = CDP-4-dehydro-3,6-dideoxy-alpha-D-glucose + NADPH + H(+). Its pathway is nucleotide-sugar biosynthesis; CDP-3,6-dideoxy-D-mannose biosynthesis; CDP-3,6-dideoxy-D-mannose from CTP and alpha-D-glucose 1-phosphate: step 4/5. Catalyzes synthesis of paratose and tyvelose, unusual 3,6-dideoxyhexose sugars that form part of the O-antigen in the lipopolysaccharides of several enteric bacteria. The chain is CDP-paratose synthase (rfbS) from Salmonella typhi.